Here is a 953-residue protein sequence, read N- to C-terminus: Glutamate receptor 3.5 (953 aa).

Positions 1–29 (MGFFVMIRDVSMGFMLLCISALWVLPIQG) are cleaved as a signal peptide. Over 30-606 (AGRESFSRNS…SPWSFLKPFT (577 aa)) the chain is Extracellular. N-linked (GlcNAc...) asparagine glycosylation is found at asparagine 38, asparagine 95, asparagine 223, asparagine 371, asparagine 397, asparagine 436, asparagine 454, and asparagine 569. Residues 607 to 627 (IEMWAVTGALFLFVGAVIWIL) form a helical membrane-spanning segment. Over 628-636 (EHRFNEEFR) the chain is Cytoplasmic. A helical membrane pass occupies residues 637–657 (GPPRRQIITVFWFSFSTMFFS). Residues 658 to 668 (HRENTVSTLGR) are Cytoplasmic-facing. The chain crosses the membrane as a helical span at residues 669–689 (FVLLVWLFVVLIINSSYTASL). Residues 690-850 (TSILTVQQLT…TENYQISVQS (161 aa)) are Extracellular-facing. A helical transmembrane segment spans residues 851 to 871 (FWGLFLICGVVWFIALTLFCW). Residues 872-953 (KVFWQYQRLR…SQSKDHETPQ (82 aa)) lie on the Cytoplasmic side of the membrane. Positions 928-953 (EKSSKKLKDGQSSAENSQSKDHETPQ) are disordered.

The protein belongs to the glutamate-gated ion channel (TC 1.A.10.1) family. As to quaternary structure, may form heteromers. Expressed predominantly in roots. Also detected in shoots.

Its subcellular location is the membrane. In terms of biological role, glutamate-gated receptor that probably acts as a non-selective cation channel. May be involved in light-signal transduction and calcium homeostasis via the regulation of calcium influx into cells. The sequence is that of Glutamate receptor 3.5 (GLR3.5) from Arabidopsis thaliana (Mouse-ear cress).